Consider the following 202-residue polypeptide: Small ribosomal subunit protein uS2 (202 aa).

This sequence belongs to the universal ribosomal protein uS2 family.

This is Small ribosomal subunit protein uS2 (rps2) from Pyrococcus abyssi (strain GE5 / Orsay).